Reading from the N-terminus, the 1012-residue chain is Formate dehydrogenase subunit alpha (1012 aa).

Residues 1–35 constitute a signal peptide (tat-type signal); sequence MLIKRRAFLKLTAAGATLSAFGGLGVDLAPAKAQA. A 4Fe-4S Mo/W bis-MGD-type domain is found at 45 to 103; sequence AKQTTSVCCYCSVGCGLIVHTDKKTNRAINVEGDPDHPINEGSLCAKGASTWQLAENER. Residues Cys-52, Cys-55, Cys-59, and Cys-89 each contribute to the [4Fe-4S] cluster site. Sec-193 lines the W-bis(molybdopterin guanine dinucleotide) pocket. Sec-193 is a non-standard amino acid (selenocysteine). Residues Thr-393, Lys-395, Lys-398, Leu-428, and Asn-430 each coordinate Ca(2+). A disulfide bridge connects residues Cys-852 and Cys-879.

It belongs to the prokaryotic molybdopterin-containing oxidoreductase family. Heterodimer of alpha (FdhA) and beta (FdhB) subunits. [4Fe-4S] cluster is required as a cofactor. W-bis(molybdopterin guanine dinucleotide) serves as cofactor. In terms of processing, the disulfide bond is likely to be broken in the active form of this enzyme. Predicted to be exported by the Tat system. The position of the signal peptide cleavage has been experimentally proven.

It is found in the periplasm. The enzyme catalyses formate + NAD(+) = CO2 + NADH. Alpha chain of the formate dehydrogenase (FDH) catalyze the reversible two-electron oxidation of formate to carbon dioxide. FDH loses activity in the presence of air, but this activity can be restored. The alpha subunit of formate dehydrogenase forms the active site. The sequence is that of Formate dehydrogenase subunit alpha from Megalodesulfovibrio gigas (Desulfovibrio gigas).